Reading from the N-terminus, the 244-residue chain is Ethylene-responsive transcription factor ERF013 (244 aa).

The segment at M1–H33 is disordered. Residues T11–S29 are compositionally biased toward low complexity. Residues K42–P99 constitute a DNA-binding region (AP2/ERF). Residues Q123–D178 are disordered. Residues E143–P156 are compositionally biased toward basic and acidic residues. The segment covering S157–P166 has biased composition (low complexity).

Belongs to the AP2/ERF transcription factor family. ERF subfamily.

It localises to the nucleus. Functionally, probably acts as a transcriptional activator. Binds to the GCC-box pathogenesis-related promoter element. May be involved in the regulation of gene expression by stress factors and by components of stress signal transduction pathways. This Arabidopsis thaliana (Mouse-ear cress) protein is Ethylene-responsive transcription factor ERF013 (ERF013).